The following is a 537-amino-acid chain: O-phosphoserine--tRNA(Cys) ligase (537 aa).

Substrate contacts are provided by residues histidine 186–threonine 188, serine 231–serine 233, tyrosine 273–tyrosine 274, and asparagine 317.

This sequence belongs to the class-II aminoacyl-tRNA synthetase family. O-phosphoseryl-tRNA(Cys) synthetase subfamily. In terms of assembly, homotetramer. Interacts with SepCysS.

It catalyses the reaction tRNA(Cys) + O-phospho-L-serine + ATP = O-phospho-L-seryl-tRNA(Cys) + AMP + diphosphate. Catalyzes the attachment of O-phosphoserine (Sep) to tRNA(Cys). The polypeptide is O-phosphoserine--tRNA(Cys) ligase (Methanococcus vannielii (strain ATCC 35089 / DSM 1224 / JCM 13029 / OCM 148 / SB)).